Reading from the N-terminus, the 305-residue chain is Glutaminase (305 aa).

Substrate-binding residues include Ser61, Asn113, Glu158, Asn165, Tyr189, Tyr241, and Val259.

It belongs to the glutaminase family. As to quaternary structure, homotetramer.

It catalyses the reaction L-glutamine + H2O = L-glutamate + NH4(+). This chain is Glutaminase, found in Clostridium botulinum (strain 657 / Type Ba4).